The primary structure comprises 499 residues: Neuronal acetylcholine receptor subunit alpha-7 (499 aa).

Positions 1 to 19 are cleaved as a signal peptide; it reads MRGSLCLALAASILHVSLQ. At 20-230 the chain is on the extracellular side; the sequence is GEFQRKLYKD…VSIRRRTLYY (211 aa). Residues Arg39 and Val41 each coordinate Ca(2+). 3 N-linked (GlcNAc...) asparagine glycosylation sites follow: Asn43, Asn87, and Asn130. Residues Cys147 and Cys161 are joined by a disulfide bond. Residues Ser169 and Tyr207 each contribute to the Ca(2+) site. Cysteines 209 and 210 form a disulfide. The next 3 membrane-spanning stretches (helical) occupy residues 231–251, 259–279, and 292–312; these read GLNL…VFLL, ISLG…VAEI, and QYFA…VIVL. The essential for TMEM35A/NACHO-mediated proper subunit assembly and trafficking to cell membrane stretch occupies residues 257 to 264; the sequence is EKISLGIT. Residues 313 to 466 are Cytoplasmic-facing; the sequence is QYHHHDPDGG…WKFAACVVDR (154 aa). A helical transmembrane segment spans residues 467–487; that stretch reads LCLMAFSVFTILCTIGILMSA.

This sequence belongs to the ligand-gated ion channel (TC 1.A.9) family. Acetylcholine receptor (TC 1.A.9.1) subfamily. Alpha-7/CHRNA7 sub-subfamily. Homopentamer. Homooligomer of the short form gives rise to unfunctional channels, as does coexpression of both long and short forms of the receptor. Can also form heteropentamers with CHRNB2, mainly found in basal forebrain cholinergic neurons. Interacts with RIC3; which is required for proper folding and assembly. Interacts with LYPD6. Interacts with CANX. In terms of processing, glycosylations at Asn-43, Asn-87 and Asn-130 are essential for TMEM35A/NACHO-mediated proper subunit assembly and trafficking to the cell membrane. In terms of tissue distribution, at least in chromaffin cells.

It is found in the postsynaptic cell membrane. The protein localises to the cell membrane. It catalyses the reaction Ca(2+)(in) = Ca(2+)(out). The enzyme catalyses K(+)(in) = K(+)(out). The catalysed reaction is Na(+)(in) = Na(+)(out). It carries out the reaction choline(out) = choline(in). It catalyses the reaction NH4(+)(in) = NH4(+)(out). The enzyme catalyses L-arginine(in) = L-arginine(out). The catalysed reaction is guanidine(out) = guanidine(in). Its activity is regulated as follows. Activated by a myriad of ligands such as acetylcholine, cytisine, nicotine, choline and epibatidine. Oligomeric amyloid-beta protein 42 activates specifially CHRNA7:CHRNB2 nAchRs. Activity is modulated by positive allosteric modulators (PAMs), such as flavonoids, with a wide range of chemical diversity, pharmacological sensitivity and efficacy. AChR activity is inhibited by the antagonists alpha-conotoxons RgIA, ImI and ImII, small disulfide-constrained peptides from cone snails. Alpha-conotoxin PnIC selectively inhibits CHRNA7:CHRNB2 over CHRNA7 homopentamer. Functionally, component of neuronal acetylcholine receptors (nAChRs) that function as pentameric, ligand-gated cation channels with high calcium permeability among other activities. nAChRs are excitatory neurotrasnmitter receptors formed by a collection of nAChR subunits known to mediate synaptic transmission in the nervous system and the neuromuscular junction. Each nAchR subunit confers differential attributes to channel properties, including activation, deactivation and desensitization kinetics, pH sensitivity, cation permeability, and binding to allosteric modulators. CHRNA7 forms homopentameric neuronal acetylcholine receptors abundantly expressed in the central nervous system, characterized by fast desensitization and high calcium permeability. Also forms heteropentamers with CHRNB2, mainly expressed in basal forebrain cholinergic neurons. Involved in the modulation of calcium-dependent signaling pathways and influences the release of neurotransmitters, including dopamine, glutamate and GABA. Also expressed in non-neuronal cells such as immune cells like lymphocytes, monocytes and macrophages. In T cells, activation induces metabotropic signaling that results in an increase of intracellular Ca2+ concentrations, independent of ionotropic receptor functions. In macrophages, required for acetylcholine-mediated inhibition of TNF and other inflammatory cytokine release. Once activated by acetylcholine, nicotine or other agonists, selectively inhibits production of pro-inflammatory cytokines while leaving anti-inflammatory cytokines undisturbed. Stimulates the cholinergic anti-inflammatory pathway, controlling inflammation by inhibiting NFKB nuclear translocation and activating the JAK2-STAT3 pathway, independently of ion channel activity. Also expressed in the urothelium where it modulates reflex bladder activity by increasing intracellular calcium through internal stores and decreasing basal ATP release. In Bos taurus (Bovine), this protein is Neuronal acetylcholine receptor subunit alpha-7 (CHRNA7).